We begin with the raw amino-acid sequence, 375 residues long: MNLSKLKFGSTIGIIGGGQLGKMMAQSAQQMGYKVIVLDPNSSCPCQYVANEFINAAYDDQIALDRLGALSDVITYEFENISANQLQALASKYNIPQGYQAIQLLQDRLTEKQTLQDSGSNIAPFLQLTDYDDLVKAVDSIGYPFIVKTRFGGYDGKGQVLVKDATHLDEARQLIQAQECVAEQYLNLSKEVSLTVTIGTNNQITYFPLQENEHQNQILFKTIVPARVQDNKEQEARNEVNKIIKAIHFIGTFTVEFFIDQQNQLYVNEIAPRPHNSGHYSIEACEYSQFDTHIKAITGQQLPQQVTLLKPAIMMNLLGRDLDLLEDQFAEHPEWHVHIYGKNERKFNRKMGHLTVLTNDINETEQKLLKQFEGR.

ATP contacts are provided by residues arginine 108, lysine 148, 153 to 159 (GYDGKGQ), 183 to 186 (EQYL), glutamate 191, histidine 214, and 268 to 269 (NE). Residues 112–298 (KQTLQDSGSN…QFDTHIKAIT (187 aa)) form the ATP-grasp domain.

It belongs to the PurK/PurT family. Homodimer.

The catalysed reaction is 5-amino-1-(5-phospho-beta-D-ribosyl)imidazole + hydrogencarbonate + ATP = 5-carboxyamino-1-(5-phospho-D-ribosyl)imidazole + ADP + phosphate + 2 H(+). The protein operates within purine metabolism; IMP biosynthesis via de novo pathway; 5-amino-1-(5-phospho-D-ribosyl)imidazole-4-carboxylate from 5-amino-1-(5-phospho-D-ribosyl)imidazole (N5-CAIR route): step 1/2. Functionally, catalyzes the ATP-dependent conversion of 5-aminoimidazole ribonucleotide (AIR) and HCO(3)(-) to N5-carboxyaminoimidazole ribonucleotide (N5-CAIR). The chain is N5-carboxyaminoimidazole ribonucleotide synthase from Staphylococcus saprophyticus subsp. saprophyticus (strain ATCC 15305 / DSM 20229 / NCIMB 8711 / NCTC 7292 / S-41).